Reading from the N-terminus, the 366-residue chain is Chorismate synthase (366 aa).

Position 48 (Arg-48) interacts with NADP(+). Residues Arg-125–Ser-127, Asn-241–Ala-242, Gly-285, Lys-300–Ser-304, and Arg-326 contribute to the FMN site.

This sequence belongs to the chorismate synthase family. Homotetramer. FMNH2 is required as a cofactor.

The catalysed reaction is 5-O-(1-carboxyvinyl)-3-phosphoshikimate = chorismate + phosphate. The protein operates within metabolic intermediate biosynthesis; chorismate biosynthesis; chorismate from D-erythrose 4-phosphate and phosphoenolpyruvate: step 7/7. In terms of biological role, catalyzes the anti-1,4-elimination of the C-3 phosphate and the C-6 proR hydrogen from 5-enolpyruvylshikimate-3-phosphate (EPSP) to yield chorismate, which is the branch point compound that serves as the starting substrate for the three terminal pathways of aromatic amino acid biosynthesis. This reaction introduces a second double bond into the aromatic ring system. This is Chorismate synthase from Ruegeria pomeroyi (strain ATCC 700808 / DSM 15171 / DSS-3) (Silicibacter pomeroyi).